The sequence spans 592 residues: ATP-binding protein Uup (592 aa).

ABC transporter domains are found at residues 1–221 (MPLI…RIEK) and 289–516 (FKLK…KSNI). Residues 36–43 (GKNGAGKS) and 321–328 (GNNGSGKS) contribute to the ATP site. The stretch at 516–550 (ISFLKTKQNQVKKELKKVLNEIEKIENSIKTLKIQ) forms a coiled coil. The tract at residues 518 to 592 (FLKTKQNQVK…IYWENLEKKL (75 aa)) is C-terminal domain (CTD), binds DNA.

The protein belongs to the ABC transporter superfamily. ABCF family. Uup subfamily.

The protein localises to the cytoplasm. The catalysed reaction is ATP + H2O = ADP + phosphate + H(+). Its function is as follows. Probably plays a role in ribosome assembly or function. May be involved in resolution of branched DNA intermediates that result from template switching in postreplication gaps. Binds DNA and has ATPase activity. This is ATP-binding protein Uup from Buchnera aphidicola subsp. Schizaphis graminum (strain Sg).